Reading from the N-terminus, the 513-residue chain is Zinc finger CCCH-type with G patch domain-containing protein (513 aa).

Residues 155-178 (PCSYYLEGECRFDEAKCRFSHGAL) form a C3H1-type zinc finger. Acidic residues-rich tracts occupy residues 252–261 (DQDEDDELSS) and 273–283 (SDEAESDMDDL). Residues 252–283 (DQDEDDELSSEESTSSMRDASSDEAESDMDDL) form a disordered region. Positions 312–358 (TRGIGSKLMEKMGYIHGTGLGSDGRGIVTPVSAQILPQGRSLDACME) constitute a G-patch domain. Polar residues predominate over residues 477–495 (QVQMQSHKQELATLQAQER). Residues 477 to 513 (QVQMQSHKQELATLQAQERSLSKEQQTRKSKNKMFEF) are disordered. Over residues 496-513 (SLSKEQQTRKSKNKMFEF) the composition is skewed to basic and acidic residues.

The protein resides in the nucleus. In terms of biological role, transcription repressor. The sequence is that of Zinc finger CCCH-type with G patch domain-containing protein from Drosophila simulans (Fruit fly).